A 353-amino-acid polypeptide reads, in one-letter code: Photosystem II D2 protein (353 aa).

The residue at position 2 (Thr2) is an N-acetylthreonine. Residue Thr2 is modified to Phosphothreonine. A helical transmembrane segment spans residues 41 to 61 (CAYFALGGWFTGTTFVTSWYT). His118 is a binding site for chlorophyll a. Residues 125–141 (GFMLRQFELARSVQLRP) traverse the membrane as a helical segment. Pheophytin a contacts are provided by Gln130 and Asn143. A helical transmembrane segment spans residues 153–166 (VFVSVFFIYPLGQS). Position 198 (His198) interacts with chlorophyll a. Residues 208–228 (AALLCAIHGATVENTLFEDGD) traverse the membrane as a helical segment. Residues His215 and Phe262 each coordinate a plastoquinone. His215 contributes to the Fe cation binding site. His269 contacts Fe cation. The helical transmembrane segment at 279 to 295 (GLWMSALGVVGLALNLR) threads the bilayer.

This sequence belongs to the reaction center PufL/M/PsbA/D family. PSII is composed of 1 copy each of membrane proteins PsbA, PsbB, PsbC, PsbD, PsbE, PsbF, PsbH, PsbI, PsbJ, PsbK, PsbL, PsbM, PsbT, PsbX, PsbY, PsbZ, Psb30/Ycf12, at least 3 peripheral proteins of the oxygen-evolving complex and a large number of cofactors. It forms dimeric complexes. Requires The D1/D2 heterodimer binds P680, chlorophylls that are the primary electron donor of PSII, and subsequent electron acceptors. It shares a non-heme iron and each subunit binds pheophytin, quinone, additional chlorophylls, carotenoids and lipids. There is also a Cl(-1) ion associated with D1 and D2, which is required for oxygen evolution. The PSII complex binds additional chlorophylls, carotenoids and specific lipids. as cofactor.

The protein localises to the plastid membrane. The catalysed reaction is 2 a plastoquinone + 4 hnu + 2 H2O = 2 a plastoquinol + O2. Its function is as follows. Photosystem II (PSII) is a light-driven water:plastoquinone oxidoreductase that uses light energy to abstract electrons from H(2)O, generating O(2) and a proton gradient subsequently used for ATP formation. It consists of a core antenna complex that captures photons, and an electron transfer chain that converts photonic excitation into a charge separation. The D1/D2 (PsbA/PsbD) reaction center heterodimer binds P680, the primary electron donor of PSII as well as several subsequent electron acceptors. D2 is needed for assembly of a stable PSII complex. In Cuscuta exaltata (Tall dodder), this protein is Photosystem II D2 protein.